Consider the following 283-residue polypeptide: Bifunctional protein FolD (283 aa).

NADP(+) contacts are provided by residues 166–168 (GAS) and isoleucine 232.

The protein belongs to the tetrahydrofolate dehydrogenase/cyclohydrolase family. As to quaternary structure, homodimer.

It carries out the reaction (6R)-5,10-methylene-5,6,7,8-tetrahydrofolate + NADP(+) = (6R)-5,10-methenyltetrahydrofolate + NADPH. It catalyses the reaction (6R)-5,10-methenyltetrahydrofolate + H2O = (6R)-10-formyltetrahydrofolate + H(+). The protein operates within one-carbon metabolism; tetrahydrofolate interconversion. Catalyzes the oxidation of 5,10-methylenetetrahydrofolate to 5,10-methenyltetrahydrofolate and then the hydrolysis of 5,10-methenyltetrahydrofolate to 10-formyltetrahydrofolate. The sequence is that of Bifunctional protein FolD from Mannheimia succiniciproducens (strain KCTC 0769BP / MBEL55E).